The following is a 95-amino-acid chain: Progonadoliberin-1 (95 aa).

Residues 1 to 22 (MAPQTFALWLLLVGTLLGQGCC) form the signal peptide. Pyrrolidone carboxylic acid is present on Gln-23. Gly-32 is modified (glycine amide).

It belongs to the GnRH family.

It is found in the secreted. Functionally, stimulates the secretion of gonadotropins. The polypeptide is Progonadoliberin-1 (gnrh1) (Morone saxatilis (Striped bass)).